The sequence spans 906 residues: Transmembrane channel-like protein 2 (906 aa).

The tract at residues 1–150 is disordered; sequence MSHQVKGLKE…SASGGESLSE (150 aa). Residues 1 to 263 lie on the Cytoplasmic side of the membrane; it reads MSHQVKGLKE…IFLRWMYGVN (263 aa). The segment covering 69-79 has biased composition (basic residues); the sequence is PRRKQTGRRRH. Basic and acidic residues predominate over residues 80-127; the sequence is REELGEQERGEAERTCEGRRKRDERASFQERTAAPKREKEIPRREEKS. Residues 135–147 are compositionally biased toward low complexity; it reads SSSLASSASGGES. The chain crosses the membrane as a helical span at residues 264 to 284; it reads LVLFGLIFGLVIIPEVLMGMP. At 285–336 the chain is on the extracellular side; sequence YGSIPRKTVPRAEEEKAMDFSVLWDFEGYIKYSALFYGYYNNQRTIGWLRYR. Residues 337-357 traverse the membrane as a helical segment; sequence LPMAYFMVGVSVFGYSLIIVI. Residues 358–431 are Cytoplasmic-facing; the sequence is RSMASNTQGS…NIHLTRFLRV (74 aa). The helical transmembrane segment at 432–452 threads the bilayer; it reads LANFLIICCLCGSGYLIYFVV. Over 453–508 the chain is Extracellular; that stretch reads KRSQQFSKMQNVSWYERNEVEIVMSLLGMFCPPLFETIAALENYHPRTGLKWQLGR. The helical transmembrane segment at 509-529 threads the bilayer; it reads IFALFLGNLYTFLLALMDDVH. Topologically, residues 530 to 693 are cytoplasmic; that stretch reads LKLANEETIK…RVFKASRSNN (164 aa). Residues 694–714 form a helical membrane-spanning segment; it reads FYMGLLLLVLFLSLLPVAYTI. The Extracellular segment spans residues 715 to 750; that stretch reads MSLPPSFDCGPFSGKNRMYDVLQETIENDFPTFLGK. Residues 751–771 traverse the membrane as a helical segment; it reads IFAFLANPGLIIPAILLMFLA. Residues 772-906 are Cytoplasmic-facing; the sequence is IYYLNSVSKS…SGKSAQRPPH (135 aa). Positions 800–906 are disordered; it reads EKSHKSVKGK…SGKSAQRPPH (107 aa). 3 stretches are compositionally biased toward polar residues: residues 820–846, 854–866, and 886–900; these read KSSSKNATQLQLTKEETTPPSASQSQA, PGTSNSASRTTLP, and APSQTHPWRSASGKS.

The protein belongs to the TMC family. As to quaternary structure, forms the MET channel composed of TMC dimer (TMC1 or TMC2), TMIE, TOMT, CIB (CIB2 or CIB3), LHFPL5 and PDH15. The interaction of TMC1 and TMC2 with TOMT is required for the transportation of TMC1/2 into the stereocilia of hair cells. Interacts (via N-terminus) with both isoforms CD1 and CD3 of PCDH15. Can form a heterodimer with TMC1, TMC5 or TMC7. In terms of tissue distribution, detected in fetal cochlea.

It is found in the cell membrane. The enzyme catalyses Ca(2+)(in) = Ca(2+)(out). Pore-forming subunit of the mechanotransducer (MET) non-selective cation channel complex located at the tips of stereocilia of cochlear hair cells and that mediates sensory transduction in the auditory system. The MET complex is composed of two dimeric pore-forming ion-conducting transmembrane TMC (TMC1 or TMC2) subunits, and aided by several auxiliary proteins including LHFPL5, TMIE, CIB2/3 and TOMT, and the tip-link PCDH15. MET channel is activated by tension in the tip-link extending from the side wall of one stereocilium to the tip of the adjacent shorter stereocilium, where the channel is located. TMC2 MET channel is highly permeable to calcium and likely transports monovalent cations. Also involved in vestibular hair cell transduction current of the mammalian inner ear. The polypeptide is Transmembrane channel-like protein 2 (Homo sapiens (Human)).